The following is a 746-amino-acid chain: tRNA (cytosine(34)-C(5))-methyltransferase (746 aa).

The tract at residues 1–30 (MGRNQKQNFFAARKRQKRENGPKRTDRQAQ) is disordered. A compositionally biased stretch (basic and acidic residues) spans 18–30 (RENGPKRTDRQAQ). S-adenosyl-L-methionine contacts are provided by residues 184 to 190 (CAAPGSK), Asp-216, Asp-243, and Asp-270. Catalysis depends on Cys-323, which acts as the Nucleophile. Disordered stretches follow at residues 454–475 (QPAA…SVPW) and 701–746 (SAEA…VATS). The span at 463–472 (ADGKPIEEKS) shows a compositional bias: basic and acidic residues. Over residues 704 to 714 (AEADSSGDGDA) the composition is skewed to acidic residues. Positions 731-746 (AETTGTPMDTEVVATS) are enriched in polar residues.

It belongs to the class I-like SAM-binding methyltransferase superfamily. RsmB/NOP family. TRM4 subfamily. In terms of tissue distribution, ubiquitously expressed during embryonic development. Some enrichment is observed in the proventriculus area of the foregut and in the hindgut.

The protein localises to the nucleus. It localises to the nucleolus. It catalyses the reaction cytidine(34) in tRNA precursor + S-adenosyl-L-methionine = 5-methylcytidine(34) in tRNA precursor + S-adenosyl-L-homocysteine + H(+). Functionally, RNA methyltransferase that methylates tRNAs. Methylates cytosine to 5-methylcytosine (m5C) at position 34 of intron-containing tRNA(Leu)(CAA) precursors. Required for short-term memory. This Drosophila melanogaster (Fruit fly) protein is tRNA (cytosine(34)-C(5))-methyltransferase.